The primary structure comprises 2241 residues: Little elongation complex subunit 1 (2241 aa).

Residues 22-185 (CASLQQNLNE…KQKNEKELRH (164 aa)) are a coiled coil. Basic and acidic residues-rich tracts occupy residues 222–233 (GEGGRRIPEKPA) and 296–315 (AFCEERHSEVSGQRPDDGNR). Disordered regions lie at residues 222–255 (GEGGRRIPEKPAKGSSAARASEQDELLPVQGGPA), 273–315 (GDFS…DGNR), and 368–387 (GEFTDSSDSDSVPPRDSMES). The residue at position 523 (Ser523) is a Phosphoserine. Positions 552 to 590 (EFSKRTLTDGSASKSPCVTGSGRFQRRERDVRESTPQSG) are disordered. The span at 559–569 (TDGSASKSPCV) shows a compositional bias: polar residues. Ser676 bears the Phosphoserine mark. Positions 703-817 (TAKGHSLPQS…PSGESTIPPE (115 aa)) are disordered. The segment covering 718-728 (TGGGQCKGRGP) has biased composition (gly residues). Polar residues predominate over residues 738–760 (DWTSLARSQAGFTRRSSGSADST). A Phosphothreonine modification is found at Thr803. At Ser896 the chain carries Phosphoserine. Residues 971 to 1119 (SGVTSGVFPA…VGEAGHPSDV (149 aa)) form a disordered region. The span at 1065-1074 (EEDTEVEDEA) shows a compositional bias: acidic residues. A compositionally biased stretch (basic and acidic residues) spans 1091 to 1104 (RQQEQAEDSHRPLG). Lys1189 carries the post-translational modification N6-acetyllysine. 3 disordered regions span residues 1231–1328 (SDVL…CLSI), 1419–1475 (ASSQ…KSRL), and 1543–1671 (VHLN…AAAS). Positions 1252 to 1266 (DTEHALLESTHHSQA) are enriched in basic and acidic residues. The span at 1460–1470 (DISSNGQSANF) shows a compositional bias: polar residues. A phosphoserine mark is found at Ser1553 and Ser1582. The segment covering 1574-1585 (DRSTPTNCSPDT) has biased composition (polar residues). Positions 1595 to 1606 (PPLPPLLPPLIA) are enriched in pro residues. At Thr1607 the chain carries Phosphothreonine. Phosphoserine is present on residues Ser1657, Ser1662, Ser1664, Ser1666, and Ser1677. Disordered stretches follow at residues 1777 to 1800 (GSSGADGSQGKSQDSGVQQDAGGK) and 1812 to 1843 (KRLRLDNKSPEPDTREVTGEGVPEDPQGGSPL). Residues 1781–1794 (ADGSQGKSQDSGVQ) are compositionally biased toward polar residues. The segment covering 1814–1829 (LRLDNKSPEPDTREVT) has biased composition (basic and acidic residues). Ser1820 is modified (phosphoserine).

This sequence belongs to the ICE1 family. Component of the little elongation complex (LEC), at least composed of ELL (ELL, ELL2 or ELL3), ZC3H8, ICE1 and ICE2. Interacts (via N-terminus domain) with ELL. Interacts (via C-terminus domain) with ICE2 and ZC3H8.

The protein resides in the nucleus. Its subcellular location is the cajal body. Functionally, component of the little elongation complex (LEC), a complex required to regulate small nuclear RNA (snRNA) gene transcription by RNA polymerase II and III. Specifically acts as a scaffold protein that promotes the LEC complex formation and recruitment and RNA polymerase II occupancy at snRNA genes in subnuclear bodies. In Mus musculus (Mouse), this protein is Little elongation complex subunit 1 (Ice1).